Here is a 218-residue protein sequence, read N- to C-terminus: Probable transaldolase (218 aa).

Lysine 87 functions as the Schiff-base intermediate with substrate in the catalytic mechanism.

It belongs to the transaldolase family. Type 3B subfamily.

Its subcellular location is the cytoplasm. It catalyses the reaction D-sedoheptulose 7-phosphate + D-glyceraldehyde 3-phosphate = D-erythrose 4-phosphate + beta-D-fructose 6-phosphate. The protein operates within carbohydrate degradation; pentose phosphate pathway; D-glyceraldehyde 3-phosphate and beta-D-fructose 6-phosphate from D-ribose 5-phosphate and D-xylulose 5-phosphate (non-oxidative stage): step 2/3. Its function is as follows. Transaldolase is important for the balance of metabolites in the pentose-phosphate pathway. This is Probable transaldolase from Bacteroides fragilis (strain YCH46).